Consider the following 931-residue polypeptide: Semaphorin-6C (931 aa).

The signal sequence occupies residues 1-25 (MPRAPHSMPLLLLLLLLSSLPQAQA). Over 26-605 (AFPQDPTPLL…ASASRSIPIP (580 aa)) the chain is Extracellular. Residues 31-517 (PTPLLTSDLQ…FPGCIVYLSL (487 aa)) form the Sema domain. Asparagine 71 is a glycosylation site (N-linked (GlcNAc...) asparagine). 4 disulfides stabilise this stretch: cysteine 112/cysteine 122, cysteine 140/cysteine 149, cysteine 263/cysteine 374, and cysteine 288/cysteine 333. Asparagine 287 is a glycosylation site (N-linked (GlcNAc...) asparagine). Asparagine 438 carries N-linked (GlcNAc...) asparagine glycosylation. Cystine bridges form between cysteine 480–cysteine 511, cysteine 520–cysteine 538, cysteine 526–cysteine 571, and cysteine 530–cysteine 546. Residues 556-591 (DVDLTGNQESTEHGDCQDGATGSQSGPGDSAYGVRR) form a disordered region. The helical transmembrane segment at 606-626 (LLLACVAAAFALGASVSGLLV) threads the bilayer. Residues 627–931 (SCACRRANRR…PAPHGGHFNF (305 aa)) are Cytoplasmic-facing. 2 disordered regions span residues 655–747 (LARL…GGPA) and 777–931 (HGPQ…HFNF). The segment covering 693-708 (PPELACLPTPETTPEL) has biased composition (low complexity). The span at 893–906 (PEGHRGRSLKRVDV) shows a compositional bias: basic and acidic residues. Over residues 911-923 (SPKPPLASPPQPA) the composition is skewed to pro residues.

The protein belongs to the semaphorin family.

The protein resides in the cell membrane. May be a stop signal for the dorsal root ganglion neurons in their target areas, and possibly also for other neurons. May also be involved in the maintenance and remodeling of neuronal connections. This chain is Semaphorin-6C (Sema6c), found in Mus musculus (Mouse).